The primary structure comprises 124 residues: Small ribosomal subunit protein uS12 (124 aa).

3-methylthioaspartic acid is present on Asp89. Positions 104 to 124 (SAGVQNRNRGRSKYGTKRPKK) are disordered. The span at 111–124 (NRGRSKYGTKRPKK) shows a compositional bias: basic residues.

It belongs to the universal ribosomal protein uS12 family. In terms of assembly, part of the 30S ribosomal subunit. Contacts proteins S8 and S17. May interact with IF1 in the 30S initiation complex.

Its function is as follows. With S4 and S5 plays an important role in translational accuracy. Interacts with and stabilizes bases of the 16S rRNA that are involved in tRNA selection in the A site and with the mRNA backbone. Located at the interface of the 30S and 50S subunits, it traverses the body of the 30S subunit contacting proteins on the other side and probably holding the rRNA structure together. The combined cluster of proteins S8, S12 and S17 appears to hold together the shoulder and platform of the 30S subunit. This is Small ribosomal subunit protein uS12 from Desulforamulus reducens (strain ATCC BAA-1160 / DSM 100696 / MI-1) (Desulfotomaculum reducens).